Reading from the N-terminus, the 221-residue chain is uncharacterized protein (221 aa).

To E.coli YheO.

This is an uncharacterized protein from Haemophilus influenzae (strain ATCC 51907 / DSM 11121 / KW20 / Rd).